The sequence spans 65 residues: Large ribosomal subunit protein bL32 (65 aa).

It belongs to the bacterial ribosomal protein bL32 family.

This chain is Large ribosomal subunit protein bL32, found in Tropheryma whipplei (strain TW08/27) (Whipple's bacillus).